A 177-amino-acid polypeptide reads, in one-letter code: Chorismate pyruvate-lyase (177 aa).

Residues methionine 36, arginine 78, leucine 116, and glutamate 157 each coordinate substrate.

It belongs to the UbiC family. As to quaternary structure, monomer.

The protein localises to the cytoplasm. The enzyme catalyses chorismate = 4-hydroxybenzoate + pyruvate. The protein operates within cofactor biosynthesis; ubiquinone biosynthesis. Removes the pyruvyl group from chorismate, with concomitant aromatization of the ring, to provide 4-hydroxybenzoate (4HB) for the ubiquinone pathway. This is Chorismate pyruvate-lyase from Pectobacterium carotovorum subsp. carotovorum (strain PC1).